Consider the following 424-residue polypeptide: 3-phosphoshikimate 1-carboxyvinyltransferase (424 aa).

Positions 21, 22, and 26 each coordinate 3-phosphoshikimate. Lys21 is a binding site for phosphoenolpyruvate. Gly91 and Arg119 together coordinate phosphoenolpyruvate. 3-phosphoshikimate-binding residues include Ser164, Gln166, Asp310, and Lys337. Gln166 contacts phosphoenolpyruvate. Asp310 (proton acceptor) is an active-site residue. Arg341 and Arg382 together coordinate phosphoenolpyruvate.

Belongs to the EPSP synthase family. As to quaternary structure, monomer.

The protein resides in the cytoplasm. It carries out the reaction 3-phosphoshikimate + phosphoenolpyruvate = 5-O-(1-carboxyvinyl)-3-phosphoshikimate + phosphate. Its pathway is metabolic intermediate biosynthesis; chorismate biosynthesis; chorismate from D-erythrose 4-phosphate and phosphoenolpyruvate: step 6/7. Catalyzes the transfer of the enolpyruvyl moiety of phosphoenolpyruvate (PEP) to the 5-hydroxyl of shikimate-3-phosphate (S3P) to produce enolpyruvyl shikimate-3-phosphate and inorganic phosphate. This chain is 3-phosphoshikimate 1-carboxyvinyltransferase, found in Campylobacter hominis (strain ATCC BAA-381 / DSM 21671 / CCUG 45161 / LMG 19568 / NCTC 13146 / CH001A).